The primary structure comprises 1624 residues: Latent-transforming growth factor beta-binding protein 4 (1624 aa).

The signal sequence occupies residues 1–27 (MPRPGTSGRRPLLLVLLLPLFAAATSA). A disordered region spans residues 125–146 (RRPRGPGGRGLLRRRPPQRAPA). One can recognise an EGF-like 1 domain in the interval 149–181 (APVLCPLICHNGGVCVKPDRCLCPPDFAGKFCQ). Intrachain disulfides connect C153/C163, C157/C169, C171/C180, C289/C311, C298/C324, and C312/C327. Positions 287 to 339 (GYCFRELRGGECASPLPGLRTQEVCCRGAGLAWGVHDCQLCSERLGNSERVSA) constitute a TB 1 domain. N-linked (GlcNAc...) asparagine glycosylation occurs at N352. The EGF-like 2; calcium-binding domain maps to 357 to 397 (DVDECATGGRCQHGECANTRGGYTCVCPDGFLLDSSRSSCI). 7 disulfide bridges follow: C361-C372, C367-C381, C383-C396, C409-C431, C418-C444, C432-C447, and C433-C459. In terms of domain architecture, TB 2 spans 407–459 (GPCFRVLRDGGCSLPILRNITKQICCCSRVGKAWGRGCQLCPPFGSEGFREIC). N425 carries N-linked (GlcNAc...) asparagine glycosylation. The tract at residues 474 to 546 (YNTRPLGQEP…PEIPESGPSS (73 aa)) is disordered. The span at 487 to 500 (SLSQPRTLPATSRP) shows a compositional bias: polar residues. The segment covering 508–522 (HRLEPRPEPRPDPRP) has biased composition (basic and acidic residues). One can recognise an EGF-like 3 domain in the interval 545 to 586 (SSGMCQRNPQVCGPGRCISRPSGYTCACDSGFRLSPQGTRCI). Intrachain disulfides connect C549-C561, C556-C570, C572-C585, C591-C603, C598-C612, C614-C627, C633-C645, C640-C654, C656-C669, C675-C687, C682-C696, C698-C707, C714-C726, C721-C735, C737-C750, C756-C768, C763-C777, C779-C792, C838-C851, C845-C860, C862-C876, C882-C894, C888-C903, C905-C918, C924-C935, C930-C944, C946-C959, C1053-C1065, C1059-C1074, and C1076-C1089. In terms of domain architecture, EGF-like 4; calcium-binding spans 587–628 (DVDECRRVPPPCAPGRCENSPGSFRCVCGPGFRAGPRAAECL). Residues 629–670 (DVDECHRVPPPCDLGRCENTPGSFLCVCPAGYQAAPHGASCQ) enclose the EGF-like 5; calcium-binding domain. Positions 671–708 (DVDECTQSPGLCGRGACKNLPGSFRCVCPAGFRGSACE) constitute an EGF-like 6; calcium-binding domain. The 42-residue stretch at 710–751 (DVDECAQEPPPCGPGRCDNTAGSFHCACPAGFRSRGPGAPCQ) folds into the EGF-like 7; calcium-binding domain. The region spanning 752-793 (DVDECARSPPPCTYGRCENTEGSFQCVCPMGFQPNTAGSECE) is the EGF-like 8; calcium-binding domain. Positions 834–877 (DVDECSSGAPPCGPHGHCTNTEGSFRCSCAPGYRAPSGRPGPCA) constitute an EGF-like 9; calcium-binding domain. Residues 878 to 919 (DVNECLEGDFCFPHGECLNTDGSFACTCAPGYRPGPRGASCL) form the EGF-like 10; calcium-binding domain. The region spanning 920–960 (DVDECSEEDLCQSGICTNTDGSFECICPPGHRAGPDLASCL) is the EGF-like 11; calcium-binding domain. The region spanning 1049–1090 (DVDECRNRSFCGAHAVCQNLPGSFQCLCDQGYEGARDGRHCV) is the EGF-like 12; calcium-binding domain. Residue N1055 is glycosylated (N-linked (GlcNAc...) asparagine). The tract at residues 1130 to 1179 (GRCVPPRTSAGTFPGSQPQAPASPVLPARPPPPPLPRRPSTPRQGPVGSG) is disordered. A compositionally biased stretch (polar residues) spans 1138–1149 (SAGTFPGSQPQA). Pro residues predominate over residues 1156–1168 (PARPPPPPLPRRP). The TB 3 domain maps to 1181–1235 (RECYFDTAAPDACDNILARNVTWQECCCTVGEGWGSGCRIQQCPGTETAEYQSLC). 10 disulfide bridges follow: C1183/C1206, C1193/C1218, C1207/C1223, C1208/C1235, C1257/C1270, C1265/C1279, C1281/C1294, C1300/C1312, C1307/C1321, and C1323/C1336. N1200 carries an N-linked (GlcNAc...) asparagine glycan. One can recognise an EGF-like 13; calcium-binding domain in the interval 1253–1295 (DVDECQLFRDQVCKSGVCVNTAPGYSCYCSNGYYYHTQRLECI). The EGF-like 14; calcium-binding domain maps to 1296–1337 (DNDECADEEPACEGGRCVNTVGSYHCTCEPPLVLDGSQRRCV). An N-linked (GlcNAc...) asparagine glycan is attached at N1339. The region spanning 1349-1402 (GVCWQEVGADLVCSHPRLDRQATYTECCCLYGEAWGMDCALCPAQDSDDFEALC) is the TB 4 domain. 4 cysteine pairs are disulfide-bonded: C1351–C1375, C1361–C1387, C1376–C1390, and C1377–C1402. Residues 1446–1458 (ALPYDPYPPPPGP) show a composition bias toward pro residues. The segment at 1446–1524 (ALPYDPYPPP…PPEGGSYAGS (79 aa)) is disordered. Residues 1501 to 1510 (RSRDTRRSFP) show a composition bias toward basic and acidic residues. 2 EGF-like domains span residues 1533 to 1573 (EAEE…MACV) and 1574 to 1618 (DINE…HHCA). Cystine bridges form between C1537–C1548, C1543–C1557, C1559–C1572, C1578–C1593, C1588–C1602, and C1604–C1617.

It belongs to the LTBP family. As to quaternary structure, forms part of the large latent transforming growth factor beta precursor complex; removal is essential for activation of complex. Interacts with LTBP1 and TGFB1. Interacts with EFEMP2; this interaction promotes fibrillar deposition of EFEMP2. In terms of processing, contains hydroxylated asparagine residues. Highly expressed in heart, skeletal muscle, pancreas, uterus, and small intestine. Weakly expressed in placenta and lung.

It is found in the secreted. It localises to the extracellular space. Its subcellular location is the extracellular matrix. Its function is as follows. Key regulator of transforming growth factor beta (TGFB1, TGFB2 and TGFB3) that controls TGF-beta activation by maintaining it in a latent state during storage in extracellular space. Associates specifically via disulfide bonds with the Latency-associated peptide (LAP), which is the regulatory chain of TGF-beta, and regulates integrin-dependent activation of TGF-beta. This chain is Latent-transforming growth factor beta-binding protein 4 (LTBP4), found in Homo sapiens (Human).